Reading from the N-terminus, the 241-residue chain is ATP synthase subunit a (241 aa).

5 helical membrane-spanning segments follow: residues 30–50, 89–109, 128–148, 193–213, and 214–234; these read GQVF…VLVG, LPFI…GALI, INTT…AGLS, LAVG…VMLL, and GLFT…FYIG.

It belongs to the ATPase A chain family. As to quaternary structure, F-type ATPases have 2 components, CF(1) - the catalytic core - and CF(0) - the membrane proton channel. CF(1) has five subunits: alpha(3), beta(3), gamma(1), delta(1), epsilon(1). CF(0) has four main subunits: a, b, b' and c.

Its subcellular location is the cellular thylakoid membrane. Its function is as follows. Key component of the proton channel; it plays a direct role in the translocation of protons across the membrane. This is ATP synthase subunit a from Synechococcus sp. (strain CC9605).